A 317-amino-acid polypeptide reads, in one-letter code: MAELACFCYPHLENDSYKFIPFNSLAIKCMLTAKVDKKDQDKFYNSIIYGIAPPPQFKKRYNTNDNSRGMNYETSMFNKVAMLVCEALNSIKVTQSDVASVLSKVVSVRHLENLVLRRENHQDVLFHSKELLLKSVLIAVGHSKEIETTATAEGGEIVFQNAAFTMWRLTYLEHKLMPILDQNFIEYKITVNEDKPVLESHVKELIAELRWQYNKFAVITHGKGHYRVVKYSSVANHADRVYATFKSNNKNGNMLEFNLLDQRIIWQNWYAFTSSMKQGNTLDVCKRLLFQKMKRESNPFKGLSTDRKMDEVSQVGI.

ATP contacts are provided by residues 107 to 109 (SVR), Lys-188, and 221 to 223 (HGK). Positions 205–241 (LIAELRWQYNKFAVITHGKGHYRVVKYSSVANHADRV) are RNA-binding. His-225 acts as the For NTPase and RTPase activities in catalysis. Arg-227 is a binding site for ATP.

Belongs to the rotavirus NSP2 family. As to quaternary structure, homooctamer. Interacts with VP1; this interaction is weak. Interacts with NSP5; this interaction leads to up-regulation of NSP5 phosphorylation and formation of viral factories. Interacts with host DCP1A, DCP1B, DDX6, EDC4 and EIF2S1/eIF2-alpha; these interactions are probably part of the sequestration of some host SGs and PBs proteins in viral factories. Mg(2+) is required as a cofactor.

It is found in the host cytoplasm. Functionally, participates in replication and packaging of the viral genome. Plays a crucial role, together with NSP5, in the formation of virus factories (viroplasms), which are large inclusions in the host cytoplasm where replication intermediates are assembled and viral RNA replication takes place. Displays ssRNA binding, NTPase, RNA triphosphatase (RTPase) and ATP-independent helix-unwinding activities. The unwinding activity may prepare and organize plus-strand RNAs for packaging and replication by removing interfering secondary structures. The RTPase activity plays a role in the removal of the gamma-phosphate from the rotavirus RNA minus strands of dsRNA genome segments. Participates in the selective exclusion of host proteins from stress granules (SG) and P bodies (PB). Also participates in the sequestration of these remodeled organelles in viral factories. This is Non-structural protein 2 from Rotavirus A (strain RVA/Human/Indonesia/69M/1980/G8P4[10]) (RV-A).